The sequence spans 427 residues: Putative F-box protein At4g10740 (427 aa).

The F-box domain occupies 2–47 (RTTMSNLPKELVEDIVSRVPLHCLRAMRLTCKNWNALLESQSFKKM).

The chain is Putative F-box protein At4g10740 from Arabidopsis thaliana (Mouse-ear cress).